Reading from the N-terminus, the 232-residue chain is MAKLSKRLQAFAAKVDRQKLYAIDEALSLVKECASAKFDESIDVAVQLGIDAKKSDQVVRGSVVLPAGTGKSVRVAVFAQGEKAEQARAAGAEVVGMEDLAEQVKAGKLDFDIVIASPDTMRVVGTLGQILGPRGLMPNPKVGTVTPDVATAVKNAKAGQVQFRVDKAGIIHATIGRASFEPTALRSNLNALVDALQKAKPATSKGVYLRKVALSSTMGVGVRVDQASLAAQ.

It belongs to the universal ribosomal protein uL1 family. As to quaternary structure, part of the 50S ribosomal subunit.

Functionally, binds directly to 23S rRNA. The L1 stalk is quite mobile in the ribosome, and is involved in E site tRNA release. In terms of biological role, protein L1 is also a translational repressor protein, it controls the translation of the L11 operon by binding to its mRNA. This chain is Large ribosomal subunit protein uL1, found in Paraburkholderia xenovorans (strain LB400).